We begin with the raw amino-acid sequence, 375 residues long: 5-amino-6-(D-ribitylamino)uracil--L-tyrosine 4-hydroxyphenyl transferase 1 (375 aa).

The Radical SAM core domain occupies 50–284 (VTYVVNRNIN…AVSRILFHGH (235 aa)). 3 residues coordinate [4Fe-4S] cluster: C64, C68, and C71.

The protein belongs to the radical SAM superfamily. CofH family. In terms of assembly, consists of two subunits, CofG and CofH. [4Fe-4S] cluster serves as cofactor.

It catalyses the reaction 5-amino-6-(D-ribitylamino)uracil + L-tyrosine + S-adenosyl-L-methionine = 5-amino-5-(4-hydroxybenzyl)-6-(D-ribitylimino)-5,6-dihydrouracil + 2-iminoacetate + 5'-deoxyadenosine + L-methionine + H(+). It participates in cofactor biosynthesis; coenzyme F0 biosynthesis. In terms of biological role, catalyzes the radical-mediated synthesis of 5-amino-5-(4-hydroxybenzyl)-6-(D-ribitylimino)-5,6-dihydrouracil from 5-amino-6-(D-ribitylamino)uracil and L-tyrosine. This is 5-amino-6-(D-ribitylamino)uracil--L-tyrosine 4-hydroxyphenyl transferase 1 from Methanosarcina acetivorans (strain ATCC 35395 / DSM 2834 / JCM 12185 / C2A).